Consider the following 509-residue polypeptide: Cytochrome P450 monooxygenase cpaH (509 aa).

A glycan (N-linked (GlcNAc...) asparagine) is linked at N15. A helical transmembrane segment spans residues 31–51 (TTILLIGVTYCILVGIYRVTL). N-linked (GlcNAc...) asparagine glycans are attached at residues N306 and N412. C453 contributes to the heme binding site.

It belongs to the cytochrome P450 family. Heme serves as cofactor.

It is found in the membrane. Its pathway is secondary metabolite biosynthesis. In terms of biological role, cytochrome P450 monooxygenase; part of the gene cluster that mediates the biosynthesis of the fungal neurotoxin cyclopiazonic acid (CPA), a nanomolar inhibitor of Ca(2+)-ATPase with a unique pentacyclic indole tetramic acid scaffold. The hybrid two module polyketide synthase-nonribosomal peptide synthetase (PKS-NRPS) cpaS incorporates acetyl-CoA, malonyl-CoA, and tryptophan (Trp) and utilizes a C-terminal redox-incompetent reductase domain to make and release the tryptophan tetramic acid, cyclo-acetoacetyl-L-tryptophan (c-AATrp), as the first intermediate in the pathway. CpaS catalyzes a Dieckmann-type cyclization on the N-acetoacetyl-Trp intermediate bound in thioester linkage to the phosphopantetheinyl arm of the T domain to form and release c-AATrp. CpaD then regiospecifically dimethylallylates c-AATrp to form beta-cyclopiazonic acid. CpaD discriminates against free Trp but accepts tryptophan-containing thiohydantoins, diketopiperazines, and linear peptides as substrates for C4-prenylation and also acts as a regiospecific O-dimethylallyltransferase (DMAT) on a tyrosine-derived tetramic acid. The beta-cyclopiazonate dehydrogenase cpaO then carries out the dehydrogenation of beta-CPA to yield an unstable enimine product, which is captured by intramolecular cyclization to create the pentacyclic fused scaffold of alpha-cyclopiazonate. Finally, the cytochrome P450 monooxygenase cpaH mediates the conversion of CPA into the less toxic 2-oxocyclopiazonic acid, the end product of the CPA pathway in A.oryza. The sequence is that of Cytochrome P450 monooxygenase cpaH from Aspergillus oryzae (Yellow koji mold).